A 180-amino-acid chain; its full sequence is Large ribosomal subunit protein uL5 (180 aa).

This sequence belongs to the universal ribosomal protein uL5 family. As to quaternary structure, part of the 50S ribosomal subunit; part of the 5S rRNA/L5/L18/L25 subcomplex. Contacts the 5S rRNA and the P site tRNA. Forms a bridge to the 30S subunit in the 70S ribosome.

In terms of biological role, this is one of the proteins that bind and probably mediate the attachment of the 5S RNA into the large ribosomal subunit, where it forms part of the central protuberance. In the 70S ribosome it contacts protein S13 of the 30S subunit (bridge B1b), connecting the 2 subunits; this bridge is implicated in subunit movement. Contacts the P site tRNA; the 5S rRNA and some of its associated proteins might help stabilize positioning of ribosome-bound tRNAs. The protein is Large ribosomal subunit protein uL5 of Streptococcus thermophilus (strain ATCC BAA-491 / LMD-9).